A 172-amino-acid polypeptide reads, in one-letter code: Ribosome maturation factor RimM (172 aa).

A PRC barrel domain is found at 96-168; sequence DGEFYYHEII…RIEVELMEGL (73 aa).

Belongs to the RimM family. As to quaternary structure, binds ribosomal protein uS19.

The protein resides in the cytoplasm. An accessory protein needed during the final step in the assembly of 30S ribosomal subunit, possibly for assembly of the head region. Essential for efficient processing of 16S rRNA. May be needed both before and after RbfA during the maturation of 16S rRNA. It has affinity for free ribosomal 30S subunits but not for 70S ribosomes. The chain is Ribosome maturation factor RimM from Streptococcus thermophilus (strain CNRZ 1066).